Consider the following 485-residue polypeptide: Probable L-xylulose kinase (485 aa).

It belongs to the FGGY kinase family. In terms of assembly, homodimer.

The enzyme catalyses L-xylulose + ATP = L-xylulose 5-phosphate + ADP + H(+). This is Probable L-xylulose kinase (lyx) from Haemophilus influenzae (strain ATCC 51907 / DSM 11121 / KW20 / Rd).